A 106-amino-acid polypeptide reads, in one-letter code: Iron-sulfur cluster assembly protein CyaY (106 aa).

Belongs to the frataxin family.

Involved in iron-sulfur (Fe-S) cluster assembly. May act as a regulator of Fe-S biogenesis. The sequence is that of Iron-sulfur cluster assembly protein CyaY from Yersinia pseudotuberculosis serotype O:3 (strain YPIII).